The primary structure comprises 685 residues: Protein hook (685 aa).

Positions 6-122 (MEIYESLIRW…RLLQLILGCA (117 aa)) constitute a Calponin-homology (CH) domain. A coiled-coil region spans residues 134–570 (QIMELEESLQ…LLAADSRYKK (437 aa)). Disordered regions lie at residues 430–449 (AAED…SSDV), 593–625 (LEKP…SGRV), and 661–685 (PGQS…FAKK). The segment covering 602-623 (ASSSSATGSGGDASTLTSTGSG) has biased composition (low complexity). A compositionally biased stretch (polar residues) spans 661-670 (PGQSFLSRQR).

This sequence belongs to the hook family. Homodimer. Interacts with microtubules via its N-terminus.

It localises to the cytoplasm. Its subcellular location is the cytoskeleton. The protein localises to the endosome. Its function is as follows. Involved in endocytic trafficking. Probably acts as a cytoskeletal linker protein that tethers endosome vesicles to the cytoskeleton. The sequence is that of Protein hook from Aedes aegypti (Yellowfever mosquito).